A 540-amino-acid chain; its full sequence is Phosphoenolpyruvate carboxykinase (ATP) (540 aa).

Arginine 65 serves as a coordination point for substrate. Lysine 87 is subject to N6-acetyllysine. Residues tyrosine 207 and lysine 213 each contribute to the substrate site. ATP-binding positions include lysine 213, histidine 232, and 248-256 (GLSGTGKTT). Positions 213 and 232 each coordinate Mn(2+). Aspartate 269 is a binding site for Mn(2+). ATP is bound by residues glutamate 297, arginine 333, 449 to 450 (RI), and threonine 455. Arginine 333 contacts substrate. The residue at position 523 (lysine 523) is an N6-acetyllysine.

It belongs to the phosphoenolpyruvate carboxykinase (ATP) family. As to quaternary structure, monomer. Mn(2+) serves as cofactor.

The protein localises to the cytoplasm. The enzyme catalyses oxaloacetate + ATP = phosphoenolpyruvate + ADP + CO2. The protein operates within carbohydrate biosynthesis; gluconeogenesis. Involved in the gluconeogenesis. Catalyzes the conversion of oxaloacetate (OAA) to phosphoenolpyruvate (PEP) through direct phosphoryl transfer between the nucleoside triphosphate and OAA. This is Phosphoenolpyruvate carboxykinase (ATP) from Escherichia coli O157:H7.